Consider the following 772-residue polypeptide: Larval serum protein 1 gamma chain (772 aa).

The N-terminal stretch at 1–16 (MKLTLVILALVACVTA) is a signal peptide. N-linked (GlcNAc...) asparagine glycosylation is present at Asn242.

This sequence belongs to the hemocyanin family. In terms of assembly, heterohexamer, composed of three subunits, alpha, beta and gamma. Larval hemolymph.

Its subcellular location is the secreted. It localises to the extracellular space. Functionally, larval storage protein (LSP) which may serve as a store of amino acids for synthesis of adult proteins. In Drosophila melanogaster (Fruit fly), this protein is Larval serum protein 1 gamma chain (Lsp1gamma).